Here is a 161-residue protein sequence, read N- to C-terminus: Phosphopantetheine adenylyltransferase (161 aa).

Thr-9 contributes to the substrate binding site. ATP contacts are provided by residues 9–10 and His-17; that span reads TF. Lys-41, Leu-73, and Arg-87 together coordinate substrate. Residues 88–90, Glu-98, and 123–129 each bind ATP; these read GLR and YSFISST.

It belongs to the bacterial CoaD family. As to quaternary structure, homohexamer. It depends on Mg(2+) as a cofactor.

The protein resides in the cytoplasm. It catalyses the reaction (R)-4'-phosphopantetheine + ATP + H(+) = 3'-dephospho-CoA + diphosphate. It participates in cofactor biosynthesis; coenzyme A biosynthesis; CoA from (R)-pantothenate: step 4/5. Reversibly transfers an adenylyl group from ATP to 4'-phosphopantetheine, yielding dephospho-CoA (dPCoA) and pyrophosphate. This chain is Phosphopantetheine adenylyltransferase, found in Pseudomonas putida (strain ATCC 47054 / DSM 6125 / CFBP 8728 / NCIMB 11950 / KT2440).